The sequence spans 141 residues: Protein archease (141 aa).

Ca(2+) is bound by residues aspartate 19 and aspartate 140.

The protein belongs to the archease family.

In terms of biological role, activates the tRNA-splicing ligase complex by facilitating the enzymatic turnover of catalytic subunit RtcB. Acts by promoting the guanylylation of RtcB, a key intermediate step in tRNA ligation. Can also alter the NTP specificity of RtcB such that ATP, dGTP or ITP is used efficiently. This is Protein archease from Thermoplasma acidophilum (strain ATCC 25905 / DSM 1728 / JCM 9062 / NBRC 15155 / AMRC-C165).